We begin with the raw amino-acid sequence, 130 residues long: MPITQNYGTGRRKSSKARIFLRKGSGNITVNGRPLDEFFGRETARMIVRQPLELTKNVANFDILITATGGGTTGQAGAIRLGIARALVEYDASLKPELRKAGFMTRDAREVERKKVGLHKARRATQFSKR.

The protein belongs to the universal ribosomal protein uS9 family.

The polypeptide is Small ribosomal subunit protein uS9 (Xylella fastidiosa (strain 9a5c)).